Here is a 108-residue protein sequence, read N- to C-terminus: Insertion element IS6110 uncharacterized 12.0 kDa protein (108 aa).

The protein belongs to the transposase 8 family.

The polypeptide is Insertion element IS6110 uncharacterized 12.0 kDa protein (Mycobacterium bovis (strain ATCC BAA-935 / AF2122/97)).